The chain runs to 415 residues: Ammonium transporter Rh type A (415 aa).

The Cytoplasmic segment spans residues 1–2; that stretch reads MR. A helical membrane pass occupies residues 3-23; sequence FIFPTIAVLLEASMIVLFGFF. The Extracellular portion of the chain corresponds to 24-51; it reads VKYETEQNAIQQPNSTNSTKVDRSLELY. N-linked (GlcNAc...) asparagine glycans are attached at residues asparagine 37 and asparagine 40. Residues 52–72 form a helical membrane-spanning segment; the sequence is PLFQDVHVMIFVGFGFLMTFL. The Cytoplasmic portion of the chain corresponds to 73-76; sequence KKYG. Residues 77-97 form a helical membrane-spanning segment; sequence FSSVGINLLIAALGLQWGTFV. The Extracellular segment spans residues 98–115; that stretch reads QGMVHRHGQTIYIGIKNM. Residues 116-136 traverse the membrane as a helical segment; that stretch reads INADFSTATVLISFGAVLGKI. Topologically, residues 137–142 are cytoplasmic; the sequence is SPTQML. Residues 143–163 form a helical membrane-spanning segment; the sequence is IMTIIEITVFAGNEYVVGEIF. Over 164–167 the chain is Extracellular; it reads QASD. The helical transmembrane segment at 168 to 188 threads the bilayer; sequence IGASMTIHAFGAYFGLAVAGV. Residues 189–208 are Cytoplasmic-facing; it reads LYRTGLRKGHEKEESEYHSD. A helical transmembrane segment spans residues 209 to 229; it reads LFAMIGTLFLWMFWPSFNSAI. At 230-236 the chain is on the extracellular side; the sequence is AETAEEQ. A helical transmembrane segment spans residues 237 to 257; that stretch reads YLAIINTYLSLVACVLTAYAM. The Cytoplasmic portion of the chain corresponds to 258 to 268; that stretch reads SSLVGHRGKLD. Residues 269 to 287 form a helical membrane-spanning segment; it reads MVHIQNATLAGGVAVGTCA. At 288–290 the chain is on the extracellular side; that stretch reads DMK. A helical membrane pass occupies residues 291 to 311; sequence IHPYGSLIIGSIAGMVSVLGF. Residues 312 to 332 are Cytoplasmic-facing; it reads RFLTPCLTAKLRIHDTCGVHN. Residues 333-353 form a helical membrane-spanning segment; that stretch reads LHGLPGVVGGLSSIVAILLGV. Residues 354–363 are Extracellular-facing; the sequence is STASSMTMQA. The chain crosses the membrane as a helical span at residues 364–384; sequence AALGSSIGSAIAGGLITGLIL. The Cytoplasmic segment spans residues 385–415; sequence RFIVRGQPSKDNFFDDSVYWEVPKEKELDNV.

The protein belongs to the ammonium transporter (TC 2.A.49) family. Rh subfamily. In terms of assembly, homodimer. Heterotrimer; a RHCE monomer interacts with a RHAG homodimer. Component of the ankyrin-1 complex in the erythrocyte, composed of ANK1, RHCE, RHAG, SLC4A1, EPB42, GYPA, GYPB and AQP1. Interacts with GYPB (via the N-terminal); this interaction bridges the (RHAG)2(RHCE) heterotrimer with the SLC4A1 Band 3 I dimer complexed with GYPA. Post-translationally, glycosylated.

It is found in the membrane. It carries out the reaction methylamine(out) = methylamine(in). It catalyses the reaction NH4(+)(in) = NH4(+)(out). The enzyme catalyses CO2(out) = CO2(in). In terms of biological role, component of the ankyrin-1 complex, a multiprotein complex involved in the stability and shape of the erythrocyte membrane. Heterotrimer with RHCE (RHAG)2(RHCE), that transports ammonium and its related derivative methylammonium, in both neutral and ionic forms, across the erythrocyte membrane. The transport of NH4(+) is electrogenic and masks the NH3 transport. Also, may act as a CO2 channel. Moreover in erythrocyte, regulates RHD membrane expression and is associated with rhesus blood group antigen expression. In Canis lupus familiaris (Dog), this protein is Ammonium transporter Rh type A.